A 354-amino-acid polypeptide reads, in one-letter code: Uroporphyrinogen decarboxylase (354 aa).

Substrate-binding positions include 27-31, D77, Y154, S209, and H327; that span reads RQAGR.

This sequence belongs to the uroporphyrinogen decarboxylase family. As to quaternary structure, homodimer.

It is found in the cytoplasm. The catalysed reaction is uroporphyrinogen III + 4 H(+) = coproporphyrinogen III + 4 CO2. Its pathway is porphyrin-containing compound metabolism; protoporphyrin-IX biosynthesis; coproporphyrinogen-III from 5-aminolevulinate: step 4/4. Catalyzes the decarboxylation of four acetate groups of uroporphyrinogen-III to yield coproporphyrinogen-III. The protein is Uroporphyrinogen decarboxylase of Shewanella pealeana (strain ATCC 700345 / ANG-SQ1).